Consider the following 195-residue polypeptide: Thymidine kinase (195 aa).

Residues 15-22 (GPMYSGKS), glutamate 23, 57-58 (SH), and 88-91 (DEVQ) each bind ATP. Catalysis depends on glutamate 89, which acts as the Proton acceptor. Phenylalanine 120 is a substrate binding site. Residues cysteine 145 and cysteine 148 each contribute to the Zn(2+) site. Tyrosine 179 provides a ligand contact to substrate. Zn(2+)-binding residues include cysteine 183 and cysteine 186.

It belongs to the thymidine kinase family.

Its subcellular location is the cytoplasm. The enzyme catalyses thymidine + ATP = dTMP + ADP + H(+). The sequence is that of Thymidine kinase from Clostridium acetobutylicum (strain ATCC 824 / DSM 792 / JCM 1419 / IAM 19013 / LMG 5710 / NBRC 13948 / NRRL B-527 / VKM B-1787 / 2291 / W).